The following is a 290-amino-acid chain: Poly-beta-1,6-N-acetyl-D-glucosamine N-deacetylase (290 aa).

A signal peptide spans 1-28 (MKYRKFIILVLSILIILPVSTLDGHHIA). The NodB homology domain occupies 114 to 290 (RSVWINFDDM…KRWDGFHEKD (177 aa)).

The protein belongs to the polysaccharide deacetylase family.

Its subcellular location is the secreted. It is found in the cell wall. Its function is as follows. Catalyzes the N-deacetylation of poly-beta-1,6-N-acetyl-D-glucosamine (PNAG, also referred to as PIA), a biofilm adhesin polysaccharide. N-deacetylation is crucial for attachment of the polysaccharide to the bacterial cell surface; it leads to the introduction of positive charges in the otherwise neutral PIA polymer, allowing electrostatic interactions. This chain is Poly-beta-1,6-N-acetyl-D-glucosamine N-deacetylase (icaB), found in Staphylococcus aureus (strain NCTC 8325 / PS 47).